The following is a 437-amino-acid chain: Protein translocase subunit SecY (437 aa).

The next 10 helical transmembrane spans lie at 19-39, 69-89, 122-142, 157-177, 189-209, 219-239, 276-296, 316-336, 378-398, and 400-420; these read LFTLAIIVVYRVGTHIPIPGV, LLQITIFALGIMPYITASIIL, VALAILQGTGLVATARSAPLF, IFTTITMVICMTAGTCVVMWL, GMSILMFISIAATFPSALWAI, WIEFGTVIAVGLIMVALVVFV, VIPVIFASSLLYIPALVAQFA, PIYIVTYFLLIVFFAFFYVAI, GSLYLGLIALVPTMALVGFGA, and QNFPFGGTSILIIVGVGLETV.

The protein belongs to the SecY/SEC61-alpha family. Component of the Sec protein translocase complex. Heterotrimer consisting of SecY, SecE and SecG subunits. The heterotrimers can form oligomers, although 1 heterotrimer is thought to be able to translocate proteins. Interacts with the ribosome. Interacts with SecDF, and other proteins may be involved. Interacts with SecA.

Its subcellular location is the cell membrane. Functionally, the central subunit of the protein translocation channel SecYEG. Consists of two halves formed by TMs 1-5 and 6-10. These two domains form a lateral gate at the front which open onto the bilayer between TMs 2 and 7, and are clamped together by SecE at the back. The channel is closed by both a pore ring composed of hydrophobic SecY resides and a short helix (helix 2A) on the extracellular side of the membrane which forms a plug. The plug probably moves laterally to allow the channel to open. The ring and the pore may move independently. In Streptomyces galbus, this protein is Protein translocase subunit SecY.